Consider the following 146-residue polypeptide: Cytidine deaminase (146 aa).

A CMP/dCMP-type deaminase domain is found at 13–140 (ECVQQLLVCS…ELLPSSFGPE (128 aa)). 54-60 (NIENACY) is a substrate binding site. Cysteine 65 is a binding site for Zn(2+). The Proton donor role is filled by glutamate 67. Zn(2+) is bound by residues cysteine 99 and cysteine 102.

The protein belongs to the cytidine and deoxycytidylate deaminase family. As to quaternary structure, homotetramer. Zn(2+) serves as cofactor. As to expression, highly expressed in granulocytes while expression is very low in fibroblasts, chondrocytes, monocytes, and T- as well as B-cell lines.

It catalyses the reaction cytidine + H2O + H(+) = uridine + NH4(+). The catalysed reaction is 2'-deoxycytidine + H2O + H(+) = 2'-deoxyuridine + NH4(+). Its function is as follows. This enzyme scavenges exogenous and endogenous cytidine and 2'-deoxycytidine for UMP synthesis. The sequence is that of Cytidine deaminase from Homo sapiens (Human).